The chain runs to 175 residues: CDP-archaeol synthase (175 aa).

The next 4 membrane-spanning stretches (helical) occupy residues 41 to 61 (GLFS…WLSF), 82 to 102 (LIVV…KSFF), 122 to 142 (FVVG…VSNF), and 150 to 170 (VIII…FIGV).

This sequence belongs to the CDP-archaeol synthase family. The cofactor is Mg(2+).

It localises to the cell membrane. It carries out the reaction 2,3-bis-O-(geranylgeranyl)-sn-glycerol 1-phosphate + CTP + H(+) = CDP-2,3-bis-O-(geranylgeranyl)-sn-glycerol + diphosphate. It functions in the pathway membrane lipid metabolism; glycerophospholipid metabolism. In terms of biological role, catalyzes the formation of CDP-2,3-bis-(O-geranylgeranyl)-sn-glycerol (CDP-archaeol) from 2,3-bis-(O-geranylgeranyl)-sn-glycerol 1-phosphate (DGGGP) and CTP. This reaction is the third ether-bond-formation step in the biosynthesis of archaeal membrane lipids. This Methanosarcina mazei (strain ATCC BAA-159 / DSM 3647 / Goe1 / Go1 / JCM 11833 / OCM 88) (Methanosarcina frisia) protein is CDP-archaeol synthase.